The primary structure comprises 236 residues: Small ribosomal subunit protein bS21m (236 aa).

Residues 65 to 136 form a disordered region; that stretch reads KPAAGAAAGG…SSKPSPMQTW (72 aa). Residues 107 to 131 are compositionally biased toward low complexity; sequence SNSSTSSSSSSSSSGGALYSSSKPS.

The protein belongs to the bacterial ribosomal protein bS21 family. Component of the mitochondrial small ribosomal subunit (mt-SSU). Mature N.crassa 74S mitochondrial ribosomes consist of a small (37S) and a large (54S) subunit. The 37S small subunit contains a 16S ribosomal RNA (16S mt-rRNA) and 32 different proteins. The 54S large subunit contains a 23S rRNA (23S mt-rRNA) and 42 different proteins.

Its subcellular location is the mitochondrion. Component of the mitochondrial ribosome (mitoribosome), a dedicated translation machinery responsible for the synthesis of mitochondrial genome-encoded proteins, including at least some of the essential transmembrane subunits of the mitochondrial respiratory chain. The mitoribosomes are attached to the mitochondrial inner membrane and translation products are cotranslationally integrated into the membrane. The protein is Small ribosomal subunit protein bS21m (mrp21) of Neurospora crassa (strain ATCC 24698 / 74-OR23-1A / CBS 708.71 / DSM 1257 / FGSC 987).